A 377-amino-acid chain; its full sequence is Queuine tRNA-ribosyltransferase (377 aa).

The active-site Proton acceptor is the D93. Substrate contacts are provided by residues 93-97 (DSGGF), D147, Q191, and G218. Positions 249–255 (GVGTPLD) are RNA binding. Residue D268 is the Nucleophile of the active site. The tract at residues 273–277 (TRNAR) is RNA binding; important for wobble base 34 recognition. Residues C306, C308, C311, and H337 each coordinate Zn(2+).

It belongs to the queuine tRNA-ribosyltransferase family. In terms of assembly, homodimer. Within each dimer, one monomer is responsible for RNA recognition and catalysis, while the other monomer binds to the replacement base PreQ1. It depends on Zn(2+) as a cofactor.

It catalyses the reaction 7-aminomethyl-7-carbaguanine + guanosine(34) in tRNA = 7-aminomethyl-7-carbaguanosine(34) in tRNA + guanine. The protein operates within tRNA modification; tRNA-queuosine biosynthesis. In terms of biological role, catalyzes the base-exchange of a guanine (G) residue with the queuine precursor 7-aminomethyl-7-deazaguanine (PreQ1) at position 34 (anticodon wobble position) in tRNAs with GU(N) anticodons (tRNA-Asp, -Asn, -His and -Tyr). Catalysis occurs through a double-displacement mechanism. The nucleophile active site attacks the C1' of nucleotide 34 to detach the guanine base from the RNA, forming a covalent enzyme-RNA intermediate. The proton acceptor active site deprotonates the incoming PreQ1, allowing a nucleophilic attack on the C1' of the ribose to form the product. After dissociation, two additional enzymatic reactions on the tRNA convert PreQ1 to queuine (Q), resulting in the hypermodified nucleoside queuosine (7-(((4,5-cis-dihydroxy-2-cyclopenten-1-yl)amino)methyl)-7-deazaguanosine). The polypeptide is Queuine tRNA-ribosyltransferase (Oleidesulfovibrio alaskensis (strain ATCC BAA-1058 / DSM 17464 / G20) (Desulfovibrio alaskensis)).